The chain runs to 998 residues: Calcium-transporting ATPase 3, endoplasmic reticulum-type (998 aa).

Residues 1-48 (MEDAYARSVSEVLDFFGVDPTKGLSDSQVVHHSRLYGRNVLPEEKRTP) are Cytoplasmic-facing. A helical transmembrane segment spans residues 49–69 (FWKLVLKQFDDLLVKILIVAA). At 70–89 (IVSFVLALANGETGLTAFLE) the chain is on the lumenal side. The chain crosses the membrane as a helical span at residues 90–109 (PFVILLILAANAAVGVITET). Residues 110-250 (NAEKALEELR…DEATPLKKKL (141 aa)) lie on the Cytoplasmic side of the membrane. Residues 251–270 (DEFGSFLAKVIAGICVLVWV) traverse the membrane as a helical segment. Residues 271–291 (VNIGHFSDPSHGGFFKGAIHY) are Lumenal-facing. Residues 292 to 309 (FKIAVALAVAAIPEGLPA) traverse the membrane as a helical segment. 4 residues coordinate Ca(2+): Val300, Ala301, Ile303, and Glu305. At 310-746 (VVTTCLALGT…AEGRAIYNNT (437 aa)) the chain is on the cytoplasmic side. Residue Asp347 is the 4-aspartylphosphate intermediate of the active site. Asp692 and Asp696 together coordinate Mg(2+). A helical transmembrane segment spans residues 747–766 (KQFIRYMISSNIGEVVCIFV). Positions 757 and 760 each coordinate Ca(2+). At 767–776 (AAVLGIPDTL) the chain is on the lumenal side. A helical membrane pass occupies residues 777-797 (APVQLLWVNLVTDGLPATAIG). 3 residues coordinate Ca(2+): Asn785, Thr788, and Asp789. The Cytoplasmic segment spans residues 798-817 (FNKQDSDVMKAKPRKVGEAV). A helical transmembrane segment spans residues 818–840 (VTGWLFFRYLVIGVYVGLATVAG). Over 841–883 (FIWWFVYSDGGPKLTYSELMNFETCALRETTYPCSIFEDRHPS) the chain is Lumenal. The chain crosses the membrane as a helical span at residues 884 to 903 (TVAMTVLVVVEMFNALNNLS). Glu894 serves as a coordination point for Ca(2+). The Cytoplasmic segment spans residues 904 to 916 (ENQSLLVITPRSN). A helical transmembrane segment spans residues 917–935 (LWLVGSIILTMLLHVLILY). Topologically, residues 936–950 (VHPLAVLFSVTPLSW) are lumenal. A helical transmembrane segment spans residues 951–971 (AEWTAVLYLSFPVIIIDELLK). Residues 972 to 998 (FLSRNTGMRFRFRLRKADLLPKDRRDK) are Cytoplasmic-facing.

It belongs to the cation transport ATPase (P-type) (TC 3.A.3) family. Type IIA subfamily. As to expression, expressed in root cap, in elongation and differentiation zones of roots, in vascular tissues of roots, leaves, floral pedicels and style, in leaves, including hydathodes and guard cells, in stamens, in petals, in sepals and in siliques.

The protein resides in the golgi apparatus membrane. It is found in the endosome membrane. Its subcellular location is the prevacuolar compartment membrane. It carries out the reaction Ca(2+)(in) + ATP + H2O = Ca(2+)(out) + ADP + phosphate + H(+). Its function is as follows. This magnesium-dependent enzyme catalyzes the hydrolysis of ATP coupled with the translocation of calcium from the cytosol to an endomembrane compartment. Involved in calcium-enhanced root growth, in tolerance to toxic levels of manganese and in secretory processes. Has a crucial role in manganese nutrition, but is not involved in transporting copper, iron or zinc. In Arabidopsis thaliana (Mouse-ear cress), this protein is Calcium-transporting ATPase 3, endoplasmic reticulum-type.